Here is a 39-residue protein sequence, read N- to C-terminus: Photosystem II reaction center protein L (39 aa).

Residues 18–38 form a helical membrane-spanning segment; sequence SLYLGLLVVFTTGILFSSYFF.

This sequence belongs to the PsbL family. In terms of assembly, PSII is composed of 1 copy each of membrane proteins PsbA, PsbB, PsbC, PsbD, PsbE, PsbF, PsbH, PsbI, PsbJ, PsbK, PsbL, PsbM, PsbT, PsbX, PsbY, PsbZ, Psb30/Ycf12, peripheral proteins PsbO, CyanoQ (PsbQ), PsbU, PsbV and a large number of cofactors. It forms dimeric complexes.

The protein localises to the cellular thylakoid membrane. Functionally, one of the components of the core complex of photosystem II (PSII). PSII is a light-driven water:plastoquinone oxidoreductase that uses light energy to abstract electrons from H(2)O, generating O(2) and a proton gradient subsequently used for ATP formation. It consists of a core antenna complex that captures photons, and an electron transfer chain that converts photonic excitation into a charge separation. This subunit is found at the monomer-monomer interface and is required for correct PSII assembly and/or dimerization. The sequence is that of Photosystem II reaction center protein L from Synechococcus sp. (strain WH7803).